A 380-amino-acid polypeptide reads, in one-letter code: Heme A synthase (380 aa).

8 helical membrane passes run 36 to 56 (IRAWLAVLFALVVAMIVVGGL), 125 to 145 (VIGLVWALGFFGFLLARKIPA), 151 to 171 (LILPGVLGGVQGAVGAWMVAS), 187 to 207 (LATHLGLAFVILGLLAWSILQ), 227 to 247 (FGLATGWLHLAFLQILIGALV), 287 to 307 (LVQFIHRIVGYLLLAYGVMVW), 320 to 340 (FAFNAGFAALSLQVVLGIVTV), and 344 to 364 (APWQIAILHQLLAVGVFVLIL). His292 is a binding site for heme. His352 contacts heme.

The protein belongs to the COX15/CtaA family. Type 2 subfamily. As to quaternary structure, interacts with CtaB. Heme b is required as a cofactor.

It is found in the cell membrane. It carries out the reaction Fe(II)-heme o + 2 A + H2O = Fe(II)-heme a + 2 AH2. It functions in the pathway porphyrin-containing compound metabolism; heme A biosynthesis; heme A from heme O: step 1/1. In terms of biological role, catalyzes the conversion of heme O to heme A by two successive hydroxylations of the methyl group at C8. The first hydroxylation forms heme I, the second hydroxylation results in an unstable dihydroxymethyl group, which spontaneously dehydrates, resulting in the formyl group of heme A. The sequence is that of Heme A synthase from Ruegeria pomeroyi (strain ATCC 700808 / DSM 15171 / DSS-3) (Silicibacter pomeroyi).